Here is a 63-residue protein sequence, read N- to C-terminus: Large ribosomal subunit protein uL29 (63 aa).

The protein belongs to the universal ribosomal protein uL29 family.

The sequence is that of Large ribosomal subunit protein uL29 from Bdellovibrio bacteriovorus (strain ATCC 15356 / DSM 50701 / NCIMB 9529 / HD100).